Consider the following 397-residue polypeptide: Odorant receptor 22a (397 aa).

Topologically, residues 1–49 are cytoplasmic; the sequence is MLSKFFPHIKEKPLSERVKSRDAFIYLDRVMWSFGWTEPENKRWILPYK. A helical membrane pass occupies residues 50 to 70; the sequence is LWLAFVNIVMLILLPISISIE. At 71–86 the chain is on the extracellular side; the sequence is YLHRFKTFSAGEFLSS. Residues 87 to 107 traverse the membrane as a helical segment; it reads LEIGVNMYGSSFKCAFTLIGF. Over 108 to 136 the chain is Cytoplasmic; that stretch reads KKRQEAKVLLDQLDKRCLSDKERSTVHRY. Residues 137-157 form a helical membrane-spanning segment; the sequence is VAMGNFFDILYHIFYSTFVVM. Residues 158 to 182 lie on the Extracellular side of the membrane; it reads NFPYFLLERRHAWRMYFPYIDSDEQ. Residues 183–203 traverse the membrane as a helical segment; the sequence is FYISSIAECFLMTEAIYMDLC. Over 204 to 263 the chain is Cytoplasmic; it reads TDVCPLISMLMARCHISLLKQRLRNLRSKPGRTEDEYLEELTECIRDHRLLLDYVDALRP. A helical transmembrane segment spans residues 264-280; it reads VFSGTIFVQFLLIGTVL. The Extracellular segment spans residues 281–286; the sequence is GLSMIN. A helical membrane pass occupies residues 287–304; the sequence is LMFFSTFWTGVATCLFMF. The Cytoplasmic segment spans residues 305-356; the sequence is DVSMETFPFCYLCNMIIDDCQEMSNCLFQSDWTSADRRYKSTLVYFLHNLQQ. A helical transmembrane segment spans residues 357 to 377; it reads PITLTAGGVFPISMQTNLAMV. Over 378 to 397 the chain is Extracellular; sequence KLAFSVVTVIKQFNLAERFQ.

The protein belongs to the insect chemoreceptor superfamily. Heteromeric odorant receptor channel (TC 1.A.69) family. Or2a subfamily. Interacts with Orco, via conserved C-terminal cytoplasmic loops. Complexes exist early in the endomembrane system in olfactory sensory neurons (OSNs), coupling these complexes to the conserved ciliary trafficking pathway. Interacts with snmp1. Expressed with Orco in 17-20 sensory neurons on the medial-proximal edge of the antenna. Expressed in the ab3A neuron which responds to ethyl butyrate.

The protein localises to the cell membrane. Functionally, odorant receptor which mediates acceptance or avoidance behavior, depending on its substrates. The odorant receptor repertoire encodes a large collection of odor stimuli that vary widely in identity, intensity, and duration. Involved in the behavioral responses ethyl butyrate and to esters in more general. Complexes with Orco to form odorant-sensing units, providing sensitive and prolonged odorant signaling and calcium permeability. They are necessary and sufficient to promote functional reconstitution of odor-evoked signaling in sensory neurons that normally respond only to carbon dioxide. The sequence is that of Odorant receptor 22a (Or22a) from Drosophila melanogaster (Fruit fly).